A 55-amino-acid chain; its full sequence is Large ribosomal subunit protein bL33 (55 aa).

Belongs to the bacterial ribosomal protein bL33 family.

The sequence is that of Large ribosomal subunit protein bL33 from Rhodospirillum centenum (strain ATCC 51521 / SW).